A 51-amino-acid chain; its full sequence is ATP synthase F(1) complex subunit epsilon, mitochondrial (51 aa).

N6-acetyllysine; alternate is present on residues lysine 21, lysine 32, and lysine 37. N6-succinyllysine; alternate occurs at positions 21, 32, and 37. At lysine 44 the chain carries N6-acetyllysine.

The protein belongs to the eukaryotic ATPase epsilon family. Component of the ATP synthase complex composed at least of ATP5F1A/subunit alpha, ATP5F1B/subunit beta, ATP5MC1/subunit c (homooctomer), MT-ATP6/subunit a, MT-ATP8/subunit 8, ATP5ME/subunit e, ATP5MF/subunit f, ATP5MG/subunit g, ATP5MK/subunit k, ATP5MJ/subunit j, ATP5F1C/subunit gamma, ATP5F1D/subunit delta, ATP5F1E/subunit epsilon, ATP5PF/subunit F6, ATP5PB/subunit b, ATP5PD/subunit d, ATP5PO/subunit OSCP. ATP synthase complex consists of a soluble F(1) head domain (subunits alpha(3) and beta(3)) - the catalytic core - and a membrane F(0) domain - the membrane proton channel (subunits c, a, 8, e, f, g, k and j). These two domains are linked by a central stalk (subunits gamma, delta, and epsilon) rotating inside the F1 region and a stationary peripheral stalk (subunits F6, b, d, and OSCP). In terms of tissue distribution, ubiquitous.

The protein resides in the mitochondrion. It is found in the mitochondrion inner membrane. Functionally, subunit epsilon, of the mitochondrial membrane ATP synthase complex (F(1)F(0) ATP synthase or Complex V) that produces ATP from ADP in the presence of a proton gradient across the membrane which is generated by electron transport complexes of the respiratory chain. ATP synthase complex consist of a soluble F(1) head domain - the catalytic core - and a membrane F(1) domain - the membrane proton channel. These two domains are linked by a central stalk rotating inside the F(1) region and a stationary peripheral stalk. During catalysis, ATP synthesis in the catalytic domain of F(1) is coupled via a rotary mechanism of the central stalk subunits to proton translocation. In vivo, can only synthesize ATP although its ATP hydrolase activity can be activated artificially in vitro. May be essential for the assembly of F(1) and may play an important role in the incorporation of the hydrophobic subunit c into the F(1)-c oligomer rotor of the mitochondrial ATP synthase complex. In Homo sapiens (Human), this protein is ATP synthase F(1) complex subunit epsilon, mitochondrial.